We begin with the raw amino-acid sequence, 373 residues long: tRNA-specific 2-thiouridylase MnmA (373 aa).

Residues 12-19 (GMSGGVDS) and Met38 contribute to the ATP site. Positions 98–100 (NPD) are interaction with target base in tRNA. Residue Cys103 is the Nucleophile of the active site. A disulfide bridge connects residues Cys103 and Cys200. Gly127 contacts ATP. Positions 150-152 (KDQ) are interaction with tRNA. Residue Cys200 is the Cysteine persulfide intermediate of the active site. The segment at 312 to 313 (RY) is interaction with tRNA.

The protein belongs to the MnmA/TRMU family.

It localises to the cytoplasm. It carries out the reaction S-sulfanyl-L-cysteinyl-[protein] + uridine(34) in tRNA + AH2 + ATP = 2-thiouridine(34) in tRNA + L-cysteinyl-[protein] + A + AMP + diphosphate + H(+). Its function is as follows. Catalyzes the 2-thiolation of uridine at the wobble position (U34) of tRNA, leading to the formation of s(2)U34. The sequence is that of tRNA-specific 2-thiouridylase MnmA from Streptococcus pyogenes serotype M1.